The sequence spans 460 residues: UDP-N-acetylmuramoylalanine--D-glutamate ligase (460 aa).

ATP is bound at residue 117–123 (GTNGKTT).

This sequence belongs to the MurCDEF family.

The protein resides in the cytoplasm. The enzyme catalyses UDP-N-acetyl-alpha-D-muramoyl-L-alanine + D-glutamate + ATP = UDP-N-acetyl-alpha-D-muramoyl-L-alanyl-D-glutamate + ADP + phosphate + H(+). The protein operates within cell wall biogenesis; peptidoglycan biosynthesis. Functionally, cell wall formation. Catalyzes the addition of glutamate to the nucleotide precursor UDP-N-acetylmuramoyl-L-alanine (UMA). This Prochlorococcus marinus (strain MIT 9313) protein is UDP-N-acetylmuramoylalanine--D-glutamate ligase.